A 307-amino-acid chain; its full sequence is Pseudouridine-5'-phosphate glycosidase (307 aa).

Catalysis depends on E25, which acts as the Proton donor. 2 residues coordinate substrate: K86 and V106. A Mn(2+)-binding site is contributed by D138. 140–142 (SAD) contributes to the substrate binding site. The active-site Nucleophile is the K159.

Belongs to the pseudouridine-5'-phosphate glycosidase family. Homotrimer. Requires Mn(2+) as cofactor.

The enzyme catalyses D-ribose 5-phosphate + uracil = psi-UMP + H2O. Its function is as follows. Catalyzes the reversible cleavage of pseudouridine 5'-phosphate (PsiMP) to ribose 5-phosphate and uracil. Functions biologically in the cleavage direction, as part of a pseudouridine degradation pathway. The chain is Pseudouridine-5'-phosphate glycosidase from Caldanaerobacter subterraneus subsp. tengcongensis (strain DSM 15242 / JCM 11007 / NBRC 100824 / MB4) (Thermoanaerobacter tengcongensis).